Here is a 190-residue protein sequence, read N- to C-terminus: Peptidyl-tRNA hydrolase (190 aa).

Residue Tyr17 participates in tRNA binding. The active-site Proton acceptor is His22. TRNA is bound by residues Tyr67 and Asn69.

It belongs to the PTH family. In terms of assembly, monomer.

The protein localises to the cytoplasm. The enzyme catalyses an N-acyl-L-alpha-aminoacyl-tRNA + H2O = an N-acyl-L-amino acid + a tRNA + H(+). Hydrolyzes ribosome-free peptidyl-tRNAs (with 1 or more amino acids incorporated), which drop off the ribosome during protein synthesis, or as a result of ribosome stalling. Its function is as follows. Catalyzes the release of premature peptidyl moieties from peptidyl-tRNA molecules trapped in stalled 50S ribosomal subunits, and thus maintains levels of free tRNAs and 50S ribosomes. The protein is Peptidyl-tRNA hydrolase of Moorella thermoacetica (strain ATCC 39073 / JCM 9320).